We begin with the raw amino-acid sequence, 160 residues long: Crossover junction endodeoxyribonuclease RuvC (160 aa).

Catalysis depends on residues Asp7, Glu73, and Asp145. 3 residues coordinate Mg(2+): Asp7, Glu73, and Asp145.

The protein belongs to the RuvC family. Homodimer which binds Holliday junction (HJ) DNA. The HJ becomes 2-fold symmetrical on binding to RuvC with unstacked arms; it has a different conformation from HJ DNA in complex with RuvA. In the full resolvosome a probable DNA-RuvA(4)-RuvB(12)-RuvC(2) complex forms which resolves the HJ. Mg(2+) serves as cofactor.

It localises to the cytoplasm. It carries out the reaction Endonucleolytic cleavage at a junction such as a reciprocal single-stranded crossover between two homologous DNA duplexes (Holliday junction).. Functionally, the RuvA-RuvB-RuvC complex processes Holliday junction (HJ) DNA during genetic recombination and DNA repair. Endonuclease that resolves HJ intermediates. Cleaves cruciform DNA by making single-stranded nicks across the HJ at symmetrical positions within the homologous arms, yielding a 5'-phosphate and a 3'-hydroxyl group; requires a central core of homology in the junction. The consensus cleavage sequence is 5'-(A/T)TT(C/G)-3'. Cleavage occurs on the 3'-side of the TT dinucleotide at the point of strand exchange. HJ branch migration catalyzed by RuvA-RuvB allows RuvC to scan DNA until it finds its consensus sequence, where it cleaves and resolves the cruciform DNA. This is Crossover junction endodeoxyribonuclease RuvC from Synechococcus sp. (strain CC9311).